Reading from the N-terminus, the 886-residue chain is cytokinesis protein 3 (886 aa).

The SH3 domain maps to 6-67; sequence QLPCMVRALY…PSNFVHCLDI (62 aa). The span at 72-88 shows a compositional bias: low complexity; it reads PGSSMSRTSASSFRYSS. The interval 72-189 is disordered; that stretch reads PGSSMSRTSA…DLSRSTPSPL (118 aa). Residues 89-104 show a composition bias toward polar residues; sequence PQKSSIDTPITSSDQG. The span at 135–154 shows a compositional bias: low complexity; it reads LNSLGSSLSLKKSVSRPPSS. Over residues 155–188 the composition is skewed to polar residues; sequence MSRTNLDVSSRWDNTADNDSQIDAQDLSRSTPSP. Ser-213 is modified (phosphoserine). Disordered regions lie at residues 219–290 and 358–393; these read TKST…SPSD and RRGS…SPHT. Residues 253 to 264 show a composition bias toward polar residues; the sequence is DNSSKPRTSLQP.

The protein belongs to the CYK3 family.

The protein localises to the cell tip. In terms of biological role, involved in cytokinesis. The sequence is that of cytokinesis protein 3 (cyk3) from Schizosaccharomyces pombe (strain 972 / ATCC 24843) (Fission yeast).